Here is a 152-residue protein sequence, read N- to C-terminus: UPF0225 protein YchJ (152 aa).

This sequence belongs to the UPF0225 family.

This Escherichia coli O6:K15:H31 (strain 536 / UPEC) protein is UPF0225 protein YchJ.